Consider the following 741-residue polypeptide: Translation initiation factor IF-2 (741 aa).

Basic and acidic residues-rich tracts occupy residues H48–K74 and K107–A123. Residues H48 to L158 are disordered. The segment covering A127–K139 has biased composition (basic residues). The segment covering Q140 to P151 has biased composition (low complexity). In terms of domain architecture, tr-type G spans E242 to K411. The tract at residues G251 to T258 is G1. Position 251-258 (G251–T258) interacts with GTP. The segment at G276–H280 is G2. Residues D297–G300 are G3. Residues D297–H301 and N351–D354 each bind GTP. Residues N351–D354 form a G4 region. Positions S387–K389 are G5.

Belongs to the TRAFAC class translation factor GTPase superfamily. Classic translation factor GTPase family. IF-2 subfamily.

It is found in the cytoplasm. Its function is as follows. One of the essential components for the initiation of protein synthesis. Protects formylmethionyl-tRNA from spontaneous hydrolysis and promotes its binding to the 30S ribosomal subunits. Also involved in the hydrolysis of GTP during the formation of the 70S ribosomal complex. The sequence is that of Translation initiation factor IF-2 (infB) from Geobacillus stearothermophilus (Bacillus stearothermophilus).